A 247-amino-acid chain; its full sequence is Syntaxin-like protein fsv1 (247 aa).

A coiled-coil region spans residues 27-94; that stretch reads NPDEEIESSL…FEKQRRASSI (68 aa). The segment at 88–130 is disordered; it reads QRRASSIPADGTSAFSANPQVASTNNKLTPLPSLQKTTSSSEG. The segment covering 100-130 has biased composition (polar residues); sequence SAFSANPQVASTNNKLTPLPSLQKTTSSSEG. Residues 159–221 enclose the t-SNARE coiled-coil homology domain; the sequence is QQMLNEQEES…DHAKNRLNKV (63 aa).

It is found in the golgi apparatus membrane. The protein localises to the prevacuolar compartment membrane. Its function is as follows. Involved in vesicle-mediated protein transport between the Golgi and the vacuole. In Schizosaccharomyces pombe (strain 972 / ATCC 24843) (Fission yeast), this protein is Syntaxin-like protein fsv1 (fsv1).